The primary structure comprises 428 residues: Light-independent protochlorophyllide reductase subunit N (428 aa).

Residues cysteine 31, cysteine 56, and cysteine 117 each coordinate [4Fe-4S] cluster.

The protein belongs to the BchN/ChlN family. As to quaternary structure, protochlorophyllide reductase is composed of three subunits; BchL, BchN and BchB. Forms a heterotetramer of two BchB and two BchN subunits. [4Fe-4S] cluster serves as cofactor.

The catalysed reaction is chlorophyllide a + oxidized 2[4Fe-4S]-[ferredoxin] + 2 ADP + 2 phosphate = protochlorophyllide a + reduced 2[4Fe-4S]-[ferredoxin] + 2 ATP + 2 H2O. It functions in the pathway porphyrin-containing compound metabolism; bacteriochlorophyll biosynthesis (light-independent). Component of the dark-operative protochlorophyllide reductase (DPOR) that uses Mg-ATP and reduced ferredoxin to reduce ring D of protochlorophyllide (Pchlide) to form chlorophyllide a (Chlide). This reaction is light-independent. The NB-protein (BchN-BchB) is the catalytic component of the complex. This is Light-independent protochlorophyllide reductase subunit N from Rhodopseudomonas palustris (strain BisB18).